The primary structure comprises 522 residues: Subtilisin-like protease 10 (522 aa).

The N-terminal stretch at 1–19 (MFFFKGVVAVLSFFSAVNA) is a signal peptide. Positions 20–117 (APFMKPNNGT…VERDQIGTSQ (98 aa)) are excised as a propeptide. The Inhibitor I9 domain maps to 36-113 (SYIVLLKRDI…HVAHVERDQI (78 aa)). Residues 127–405 (NWGLGRLSNS…KLLVNGANGT (279 aa)) form the Peptidase S8 domain. Active-site charge relay system residues include D159 and H190. N-linked (GlcNAc...) asparagine glycosylation is present at N251. The Charge relay system role is filled by S348. The segment covering 383–397 (SASVKNPGPNTTNKL) has biased composition (polar residues). Residues 383–515 (SASVKNPGPN…GWNRPMWWNR (133 aa)) form a disordered region. 2 N-linked (GlcNAc...) asparagine glycosylation sites follow: N392 and N403. Residues 432–459 (SQNPPPGQNPPPGQNPPPEQPAPSPPAN) are compositionally biased toward pro residues.

This sequence belongs to the peptidase S8 family.

Its subcellular location is the secreted. Functionally, secreted subtilisin-like serine protease with keratinolytic activity that contributes to pathogenicity. The sequence is that of Subtilisin-like protease 10 (SUB10) from Trichophyton verrucosum (strain HKI 0517).